The sequence spans 125 residues: uncharacterized protein (125 aa).

It belongs to the anhydro-N-acetylmuramic acid kinase family.

This is an uncharacterized protein from Yersinia enterocolitica.